The following is a 459-amino-acid chain: UDP-N-acetylmuramate--L-alanine ligase (459 aa).

An ATP-binding site is contributed by 113-119; it reads GSHGKTT.

This sequence belongs to the MurCDEF family.

It localises to the cytoplasm. The catalysed reaction is UDP-N-acetyl-alpha-D-muramate + L-alanine + ATP = UDP-N-acetyl-alpha-D-muramoyl-L-alanine + ADP + phosphate + H(+). Its pathway is cell wall biogenesis; peptidoglycan biosynthesis. Functionally, cell wall formation. In Persephonella marina (strain DSM 14350 / EX-H1), this protein is UDP-N-acetylmuramate--L-alanine ligase.